Consider the following 205-residue polypeptide: Glycerol-3-phosphate acyltransferase (205 aa).

Over 1 to 3 (MSA) the chain is Periplasmic. Residues 4-24 (IAPGMILIAYLCGSISSAILV) form a helical membrane-spanning segment. Over 25–52 (CRLCGLPDPRTSGSGNPGATNVLRIGGK) the chain is Cytoplasmic. A helical membrane pass occupies residues 53–73 (GAAVAVLIFDVLKGMLPVWGA). Residues 74–80 (YELGVSP) lie on the Periplasmic side of the membrane. Residues 81–101 (FWLGLIAIAACLGHIWPVFFG) traverse the membrane as a helical segment. The Cytoplasmic segment spans residues 102–111 (FKGGKGVATA). The chain crosses the membrane as a helical span at residues 112–132 (FGAIAPISWDLTGVMAGTWLL). The Periplasmic segment spans residues 133–137 (TVLLS). A helical transmembrane segment spans residues 138 to 158 (GYSSLGAIVSALIAPFYVWWF). The Cytoplasmic segment spans residues 159 to 205 (KPQFTFPVSMLSCLILLRHHDNIQRLWRRQETKIWTKFKRKREKDPE).

It belongs to the PlsY family. As to quaternary structure, probably interacts with PlsX.

The protein resides in the cell inner membrane. It catalyses the reaction sn-glycerol 3-phosphate + an acyl-CoA = a 1-acyl-sn-glycero-3-phosphate + CoA. The catalysed reaction is a fatty acyl-[ACP] + sn-glycerol 3-phosphate = a 1-acyl-sn-glycero-3-phosphate + holo-[ACP]. It functions in the pathway lipid metabolism; phospholipid metabolism. In terms of biological role, catalyzes the transfer of an acyl group from acyl-ACP to glycerol-3-phosphate (G3P) to form lysophosphatidic acid (LPA). This enzyme can also utilize acyl-CoA as fatty acyl donor, but not acyl-PO(4). This is Glycerol-3-phosphate acyltransferase from Shigella flexneri serotype 5b (strain 8401).